We begin with the raw amino-acid sequence, 954 residues long: Glycine dehydrogenase (decarboxylating) (954 aa).

Position 704 is an N6-(pyridoxal phosphate)lysine (lysine 704).

Belongs to the GcvP family. As to quaternary structure, the glycine cleavage system is composed of four proteins: P, T, L and H. Pyridoxal 5'-phosphate is required as a cofactor.

It carries out the reaction N(6)-[(R)-lipoyl]-L-lysyl-[glycine-cleavage complex H protein] + glycine + H(+) = N(6)-[(R)-S(8)-aminomethyldihydrolipoyl]-L-lysyl-[glycine-cleavage complex H protein] + CO2. Functionally, the glycine cleavage system catalyzes the degradation of glycine. The P protein binds the alpha-amino group of glycine through its pyridoxal phosphate cofactor; CO(2) is released and the remaining methylamine moiety is then transferred to the lipoamide cofactor of the H protein. The sequence is that of Glycine dehydrogenase (decarboxylating) from Sinorhizobium medicae (strain WSM419) (Ensifer medicae).